The primary structure comprises 84 residues: UPF0729 protein F18A11.3 (84 aa).

The chain crosses the membrane as a helical span at residues 1 to 21 (MVCLPCIFLPIMMAIYMKFIM).

The protein belongs to the UPF0729 family.

It is found in the cell membrane. This chain is UPF0729 protein F18A11.3, found in Caenorhabditis elegans.